A 427-amino-acid polypeptide reads, in one-letter code: 3-phosphoshikimate 1-carboxyvinyltransferase (427 aa).

Residues Lys-22, Ser-23, and Arg-27 each coordinate 3-phosphoshikimate. Position 22 (Lys-22) interacts with phosphoenolpyruvate. Residues Gly-96 and Arg-124 each coordinate phosphoenolpyruvate. 3-phosphoshikimate contacts are provided by Ser-169, Ser-170, Gln-171, Ser-197, Asp-313, Asn-336, and Lys-340. Position 171 (Gln-171) interacts with phosphoenolpyruvate. The active-site Proton acceptor is Asp-313. The phosphoenolpyruvate site is built by Arg-344, Arg-386, and Lys-411.

The protein belongs to the EPSP synthase family. As to quaternary structure, monomer.

It is found in the cytoplasm. It catalyses the reaction 3-phosphoshikimate + phosphoenolpyruvate = 5-O-(1-carboxyvinyl)-3-phosphoshikimate + phosphate. It functions in the pathway metabolic intermediate biosynthesis; chorismate biosynthesis; chorismate from D-erythrose 4-phosphate and phosphoenolpyruvate: step 6/7. Functionally, catalyzes the transfer of the enolpyruvyl moiety of phosphoenolpyruvate (PEP) to the 5-hydroxyl of shikimate-3-phosphate (S3P) to produce enolpyruvyl shikimate-3-phosphate and inorganic phosphate. The protein is 3-phosphoshikimate 1-carboxyvinyltransferase of Klebsiella pneumoniae subsp. pneumoniae (strain ATCC 700721 / MGH 78578).